Reading from the N-terminus, the 1066-residue chain is Bifunctional cytochrome P450/NADPH--P450 reductase (1066 aa).

Residues Met1–Ser480 are cytochrome P450. Heme is bound at residue Cys407. Positions Thr481 to Asp1066 are NADPH-P-450 reductase. The Flavodoxin-like domain occupies Met500 to Leu641. FMN contacts are provided by residues Ser506–Cys511, Ser554–Gly557, Cys588, and Thr596. In terms of domain architecture, FAD-binding FR-type spans Gln676–Pro904.

This sequence in the N-terminal section; belongs to the cytochrome P450 family. It depends on FAD as a cofactor. FMN is required as a cofactor. Heme serves as cofactor.

It localises to the membrane. The enzyme catalyses an organic molecule + reduced [NADPH--hemoprotein reductase] + O2 = an alcohol + oxidized [NADPH--hemoprotein reductase] + H2O + H(+). It catalyses the reaction 2 oxidized [cytochrome P450] + NADPH = 2 reduced [cytochrome P450] + NADP(+) + H(+). Its activity is regulated as follows. Stimulated NADPH--cytochrome reductase activity in the presence of substrate. Inhibited by fatty acid substrates longer than 13 carbons and the degree of inhibition increases with increasing chain length. Its function is as follows. Functions as a fatty acid monooxygenase. Catalyzes hydroxylation of fatty acids at omega-1, omega-2 and omega-3 positions. Shows activity toward fatty acids with a chain length of 9-18 carbons with optimum chain lengths of 12-14 carbons (lauric, tridecylic and myristic acids). Can also use shorter saturated fatty acids with a chain length of 9 or 10 carbons as substrates. Also displays a NADPH-dependent reductase activity in the C-terminal domain, which allows electron transfer from NADPH to the heme iron of the cytochrome P450 N-terminal domain. The polypeptide is Bifunctional cytochrome P450/NADPH--P450 reductase (Fusarium oxysporum (Fusarium vascular wilt)).